The chain runs to 111 residues: Universal stress protein B (111 aa).

2 helical membrane-spanning segments follow: residues 1 to 21 and 90 to 110; these read MIST…NMAR and FILT…LAIW.

This sequence belongs to the universal stress protein B family.

It localises to the cell inner membrane. This Erwinia tasmaniensis (strain DSM 17950 / CFBP 7177 / CIP 109463 / NCPPB 4357 / Et1/99) protein is Universal stress protein B.